A 168-amino-acid chain; its full sequence is Small ribosomal subunit protein uS5 (168 aa).

An S5 DRBM domain is found at leucine 13 to valine 76.

Belongs to the universal ribosomal protein uS5 family. As to quaternary structure, part of the 30S ribosomal subunit. Contacts proteins S4 and S8.

Its function is as follows. With S4 and S12 plays an important role in translational accuracy. Located at the back of the 30S subunit body where it stabilizes the conformation of the head with respect to the body. The polypeptide is Small ribosomal subunit protein uS5 (Pseudoalteromonas translucida (strain TAC 125)).